We begin with the raw amino-acid sequence, 948 residues long: Bifunctional uridylyltransferase/uridylyl-removing enzyme (948 aa).

Residues 1–372 (METHHIDFST…RFANRSRKIP (372 aa)) form a uridylyltransferase region. The segment at 373 to 728 (GTVEFVEDRG…VRTDSFHAIT (356 aa)) is uridylyl-removing. The HD domain maps to 489 to 605 (VDEHLIRAVE…IDFADRVQSL (117 aa)). ACT domains are found at residues 729–810 (EITV…EVIA) and 840–921 (VIEV…ERMP).

Belongs to the GlnD family. Mg(2+) serves as cofactor.

The catalysed reaction is [protein-PII]-L-tyrosine + UTP = [protein-PII]-uridylyl-L-tyrosine + diphosphate. The enzyme catalyses [protein-PII]-uridylyl-L-tyrosine + H2O = [protein-PII]-L-tyrosine + UMP + H(+). Its activity is regulated as follows. Uridylyltransferase (UTase) activity is inhibited by glutamine, while glutamine activates uridylyl-removing (UR) activity. Modifies, by uridylylation and deuridylylation, the PII regulatory proteins (GlnB and homologs), in response to the nitrogen status of the cell that GlnD senses through the glutamine level. Under low glutamine levels, catalyzes the conversion of the PII proteins and UTP to PII-UMP and PPi, while under higher glutamine levels, GlnD hydrolyzes PII-UMP to PII and UMP (deuridylylation). Thus, controls uridylylation state and activity of the PII proteins, and plays an important role in the regulation of nitrogen fixation and metabolism. In Rhizobium tropici, this protein is Bifunctional uridylyltransferase/uridylyl-removing enzyme.